A 369-amino-acid polypeptide reads, in one-letter code: GTPase Obg (369 aa).

Residues 1–159 (MKFIDEAKIE…RELRLELKVL (159 aa)) enclose the Obg domain. Positions 128–148 (IHFKSSTNRAPRQKSEGKEGE) are disordered. In terms of domain architecture, OBG-type G spans 160–333 (ADIGLLGMPN…LVTEIYEYIA (174 aa)). GTP-binding positions include 166-173 (GMPNAGKS), 191-195 (FTTLH), 213-216 (DIPG), 283-286 (NKLD), and 314-316 (SAL). 2 residues coordinate Mg(2+): Ser173 and Thr193.

This sequence belongs to the TRAFAC class OBG-HflX-like GTPase superfamily. OBG GTPase family. As to quaternary structure, monomer. Mg(2+) serves as cofactor.

It localises to the cytoplasm. An essential GTPase which binds GTP, GDP and possibly (p)ppGpp with moderate affinity, with high nucleotide exchange rates and a fairly low GTP hydrolysis rate. Plays a role in control of the cell cycle, stress response, ribosome biogenesis and in those bacteria that undergo differentiation, in morphogenesis control. This chain is GTPase Obg, found in Janthinobacterium sp. (strain Marseille) (Minibacterium massiliensis).